An 84-amino-acid polypeptide reads, in one-letter code: Small ribosomal subunit protein eS27z (84 aa).

The segment at 39 to 61 (CQGCFNITTVFSHSQTVVMCGNC) adopts a C4-type zinc-finger fold.

It belongs to the eukaryotic ribosomal protein eS27 family. (Microbial infection) May interact with Tomato yellow leaf curl virus (TYLCV) and papaya leaf curl China virus (PaLcuCNV) C2 proteins. This interaction prevents activation of Jasmonate signaling, thereby facilitating viral uptake by insects vectors. Zn(2+) is required as a cofactor.

In Arabidopsis thaliana (Mouse-ear cress), this protein is Small ribosomal subunit protein eS27z (RPS27A).